Reading from the N-terminus, the 558-residue chain is Serine/threonine-protein phosphatase 2B catalytic subunit (558 aa).

Asp-128, His-130, and Asp-156 together coordinate Fe cation. The Zn(2+) site is built by Asp-156 and Asn-188. The active-site Proton donor is His-189. 2 residues coordinate Zn(2+): His-237 and His-319. Disordered stretches follow at residues 415–439 (LREDSATTSPGSASPALPSAANQDP) and 534–558 (ALERATREADNDKKLQTLSRRLSTS). Residues 420–435 (ATTSPGSASPALPSAA) are compositionally biased toward low complexity. Over residues 534–548 (ALERATREADNDKKL) the composition is skewed to basic and acidic residues. A compositionally biased stretch (polar residues) spans 549-558 (QTLSRRLSTS).

It belongs to the PPP phosphatase family. PP-2B subfamily. Composed of two components (A and B), the A component is the catalytic subunit and the B component confers calcium sensitivity. It depends on Fe(3+) as a cofactor. Zn(2+) is required as a cofactor.

It catalyses the reaction O-phospho-L-seryl-[protein] + H2O = L-seryl-[protein] + phosphate. It carries out the reaction O-phospho-L-threonyl-[protein] + H2O = L-threonyl-[protein] + phosphate. Its function is as follows. Calcium-dependent, calmodulin-stimulated protein phosphatase. This subunit may have a role in the calmodulin activation of calcineurin. The sequence is that of Serine/threonine-protein phosphatase 2B catalytic subunit (cna-1) from Neurospora crassa (strain ATCC 24698 / 74-OR23-1A / CBS 708.71 / DSM 1257 / FGSC 987).